The primary structure comprises 593 residues: Prospero homeobox protein 2 (593 aa).

Disordered regions lie at residues 24 to 48 (CMDQ…QLPS), 79 to 130 (SPSS…GGTR), 153 to 199 (TEPR…KDLC), 260 to 284 (QERS…SAYK), 298 to 333 (PQAG…QSPL), and 356 to 388 (GRGP…PWGL). The span at 87 to 99 (RARESLRCPEKGR) shows a compositional bias: basic and acidic residues. The span at 167 to 181 (PRSSPRARPRNSCSS) shows a compositional bias: low complexity. Residues 363 to 380 (WSGSPPQDAAFQSHTSPE) are compositionally biased toward polar residues. Positions 433-491 (QEGLSPGHLKKAKLMFFFTRYPSSSLLKAYFPDVQFNRCITSQMIKWFSNFREFYYIQM) constitute a Prospero-type homeo domain. The segment at 433–591 (QEGLSPGHLK…KSPSFLPGLF (159 aa)) is homeo-Prospero. Residues 492–591 (EKYARQALSD…KSPSFLPGLF (100 aa)) enclose the Prospero domain.

The protein belongs to the Prospero homeodomain family. Expressed in testis.

It is found in the nucleus. In terms of biological role, transcription regulator. Does not seem to be essential for embryonic development and postnatal survival. The chain is Prospero homeobox protein 2 (Prox2) from Mus musculus (Mouse).